The following is a 94-amino-acid chain: Acylphosphatase (94 aa).

One can recognise an Acylphosphatase-like domain in the interval 8–94 (ALHVIVKGRV…RGYTDFRIEV (87 aa)). Catalysis depends on residues Arg23 and Asn41.

This sequence belongs to the acylphosphatase family.

It carries out the reaction an acyl phosphate + H2O = a carboxylate + phosphate + H(+). The sequence is that of Acylphosphatase (acyP) from Treponema denticola (strain ATCC 35405 / DSM 14222 / CIP 103919 / JCM 8153 / KCTC 15104).